A 197-amino-acid chain; its full sequence is Molybdenum cofactor guanylyltransferase (197 aa).

GTP contacts are provided by residues 10–12, Lys-23, Asn-51, Asp-69, and Asp-99; that span reads LAG. A Mg(2+)-binding site is contributed by Asp-99.

It belongs to the MobA family. As to quaternary structure, monomer. Requires Mg(2+) as cofactor.

Its subcellular location is the cytoplasm. The enzyme catalyses Mo-molybdopterin + GTP + H(+) = Mo-molybdopterin guanine dinucleotide + diphosphate. In terms of biological role, transfers a GMP moiety from GTP to Mo-molybdopterin (Mo-MPT) cofactor (Moco or molybdenum cofactor) to form Mo-molybdopterin guanine dinucleotide (Mo-MGD) cofactor. This Shewanella sp. (strain ANA-3) protein is Molybdenum cofactor guanylyltransferase.